The chain runs to 200 residues: Recombination protein RecR (200 aa).

Residues 57–72 (CQHCRTFTENSLCDIC) form a C4-type zinc finger. In terms of domain architecture, Toprim spans 81 to 176 (GQLCIVETPA…NITRIAHGVP (96 aa)).

The protein belongs to the RecR family.

May play a role in DNA repair. It seems to be involved in an RecBC-independent recombinational process of DNA repair. It may act with RecF and RecO. The chain is Recombination protein RecR from Tolumonas auensis (strain DSM 9187 / NBRC 110442 / TA 4).